The sequence spans 1257 residues: Pesticidal crystal protein Cry12Aa (1257 aa).

Belongs to the delta endotoxin family.

Functionally, endotoxin with nematicidal activity. This Bacillus thuringiensis protein is Pesticidal crystal protein Cry12Aa (cry12Aa).